The sequence spans 324 residues: Beta-ketoacyl-[acyl-carrier-protein] synthase III (324 aa).

Active-site residues include C112 and H249. The ACP-binding stretch occupies residues 250 to 254; the sequence is QANDR. N279 is an active-site residue.

It belongs to the thiolase-like superfamily. FabH family. In terms of assembly, homodimer.

It localises to the cytoplasm. The catalysed reaction is malonyl-[ACP] + acetyl-CoA + H(+) = 3-oxobutanoyl-[ACP] + CO2 + CoA. It participates in lipid metabolism; fatty acid biosynthesis. Its function is as follows. Catalyzes the condensation reaction of fatty acid synthesis by the addition to an acyl acceptor of two carbons from malonyl-ACP. Catalyzes the first condensation reaction which initiates fatty acid synthesis and may therefore play a role in governing the total rate of fatty acid production. Possesses both acetoacetyl-ACP synthase and acetyl transacylase activities. Its substrate specificity determines the biosynthesis of branched-chain and/or straight-chain of fatty acids. The chain is Beta-ketoacyl-[acyl-carrier-protein] synthase III from Streptococcus gordonii (strain Challis / ATCC 35105 / BCRC 15272 / CH1 / DL1 / V288).